The sequence spans 899 residues: RNA-binding motif protein 25 (899 aa).

Polar residues predominate over residues 1–20; that stretch reads MADESSSPATGDPNSQKPES. The disordered stretch occupies residues 1–112; sequence MADESSSPAT…SMPQYQPQPG (112 aa). The span at 26-63 shows a compositional bias: pro residues; sequence IPNPNPNPSLTPPPPQQHSQPPVAPLVPPGPPYAPPAQ. Positions 204-281 constitute an RRM domain; that stretch reads TTIYIGKIAT…QELLVNVNQA (78 aa). Disordered stretches follow at residues 298 to 572 and 611 to 778; these read KKAK…EQNL and GESA…KESG. Basic and acidic residues-rich tracts occupy residues 317–340 and 354–372; these read EQDK…KENI and EADR…ERLK. Pro residues predominate over residues 375–384; the sequence is PLPPPPPPPA. Basic and acidic residues predominate over residues 430-505; that stretch reads WSKRNDRRSR…QYEKEKEKEK (76 aa). Positions 434 to 578 form a coiled coil; that stretch reads NDRRSRERGE…EQNLQQQQLD (145 aa). The span at 515 to 524 shows a compositional bias: acidic residues; sequence YEEEEEEDDD. The Nuclear localization signal 1 motif lies at 526-533; it reads SRRRWHRA. A compositionally biased stretch (basic and acidic residues) spans 533 to 568; sequence AALDERRRRQLREKEDDLADRLKEEEEVAEAKRSAE. Polar residues predominate over residues 626–640; sequence GSGNESMAIDNNSGS. Basic and acidic residues-rich tracts occupy residues 723–733 and 740–778; these read PKEETIETEKQ and DKAS…KESG. The Nuclear localization signal 2 motif lies at 735 to 742; it reads SRRSHDKA. The PWI domain occupies 802-899; sequence EDLFSYEINW…EAGVPVKSKA (98 aa).

As to quaternary structure, specifically associates with functional splicing complexes. Associates with exon junction complex (EJC) proteins. Post-translationally, phosphorylated; the phosphorylation level is repressed by abscisic acid (ABA).

The protein localises to the nucleus. Functionally, RNA-binding protein that acts as a regulator of alternative pre-mRNA splicing. Negative regulator of responses to abscisic acid (ABA), including in early development. This chain is RNA-binding motif protein 25, found in Arabidopsis thaliana (Mouse-ear cress).